Consider the following 338-residue polypeptide: uncharacterized protein (338 aa).

This is an uncharacterized protein from Bacillus subtilis (strain 168).